Reading from the N-terminus, the 160-residue chain is Crossover junction endodeoxyribonuclease RuvC (160 aa).

Active-site residues include Asp9, Glu68, and Asp141. Mg(2+) contacts are provided by Asp9, Glu68, and Asp141.

This sequence belongs to the RuvC family. In terms of assembly, homodimer which binds Holliday junction (HJ) DNA. The HJ becomes 2-fold symmetrical on binding to RuvC with unstacked arms; it has a different conformation from HJ DNA in complex with RuvA. In the full resolvosome a probable DNA-RuvA(4)-RuvB(12)-RuvC(2) complex forms which resolves the HJ. Requires Mg(2+) as cofactor.

The protein localises to the cytoplasm. It catalyses the reaction Endonucleolytic cleavage at a junction such as a reciprocal single-stranded crossover between two homologous DNA duplexes (Holliday junction).. Functionally, the RuvA-RuvB-RuvC complex processes Holliday junction (HJ) DNA during genetic recombination and DNA repair. Endonuclease that resolves HJ intermediates. Cleaves cruciform DNA by making single-stranded nicks across the HJ at symmetrical positions within the homologous arms, yielding a 5'-phosphate and a 3'-hydroxyl group; requires a central core of homology in the junction. The consensus cleavage sequence is 5'-(A/T)TT(C/G)-3'. Cleavage occurs on the 3'-side of the TT dinucleotide at the point of strand exchange. HJ branch migration catalyzed by RuvA-RuvB allows RuvC to scan DNA until it finds its consensus sequence, where it cleaves and resolves the cruciform DNA. The sequence is that of Crossover junction endodeoxyribonuclease RuvC from Campylobacter jejuni subsp. jejuni serotype O:23/36 (strain 81-176).